A 239-amino-acid chain; its full sequence is Sugar fermentation stimulation protein homolog (239 aa).

The protein belongs to the SfsA family.

This chain is Sugar fermentation stimulation protein homolog, found in Alcanivorax borkumensis (strain ATCC 700651 / DSM 11573 / NCIMB 13689 / SK2).